The chain runs to 365 residues: GDSL esterase/lipase At3g62280 (365 aa).

An N-terminal signal peptide occupies residues 1-25; the sequence is MDYTVSSLQCFFLVLCLSLLVCSNS. Residue Ser-43 is the Nucleophile of the active site. Residues Asn-137, Asn-178, and Asn-231 are each glycosylated (N-linked (GlcNAc...) asparagine). Catalysis depends on residues Asp-333 and His-336.

It belongs to the 'GDSL' lipolytic enzyme family.

The protein localises to the secreted. This chain is GDSL esterase/lipase At3g62280, found in Arabidopsis thaliana (Mouse-ear cress).